Consider the following 161-residue polypeptide: Ribonuclease P protein component 2 (161 aa).

The protein belongs to the eukaryotic/archaeal RNase P protein component 2 family. As to quaternary structure, consists of a catalytic RNA component and at least 4-5 protein subunits.

The protein localises to the cytoplasm. The enzyme catalyses Endonucleolytic cleavage of RNA, removing 5'-extranucleotides from tRNA precursor.. Part of ribonuclease P, a protein complex that generates mature tRNA molecules by cleaving their 5'-ends. The protein is Ribonuclease P protein component 2 of Methanopyrus kandleri (strain AV19 / DSM 6324 / JCM 9639 / NBRC 100938).